Reading from the N-terminus, the 567-residue chain is Septation ring formation regulator EzrA (567 aa).

At 1–2 (MG) the chain is on the extracellular side. The helical transmembrane segment at 3–21 (MAWIVLLLGAGAIIYNHVY) threads the bilayer. Residues 22-567 (RKRMYREIDR…LWQEDNSREQ (546 aa)) lie on the Cytoplasmic side of the membrane. 2 coiled-coil regions span residues 98 to 159 (YRQA…AYRY) and 251 to 497 (HMER…IEQA).

It belongs to the EzrA family.

It localises to the cell membrane. Functionally, negative regulator of FtsZ ring formation; modulates the frequency and position of FtsZ ring formation. Inhibits FtsZ ring formation at polar sites. Interacts either with FtsZ or with one of its binding partners to promote depolymerization. This is Septation ring formation regulator EzrA from Geobacillus kaustophilus (strain HTA426).